Here is a 317-residue protein sequence, read N- to C-terminus: Protein-methionine-sulfoxide reductase catalytic subunit MsrP (317 aa).

Residues 1–40 constitute a signal peptide (tat-type signal); it reads MNKFTKTDVTPEKLFIQRRKIIQGMSVLSAAAAFPNLAAA. Mo-molybdopterin contacts are provided by residues Asn72, 75–76, Cys129, Thr164, Asn216, Arg221, and 232–234; these read YE and SIK.

It belongs to the MsrP family. In terms of assembly, heterodimer of a catalytic subunit (MsrP) and a heme-binding subunit (MsrQ). Mo-molybdopterin serves as cofactor. In terms of processing, predicted to be exported by the Tat system. The position of the signal peptide cleavage has not been experimentally proven.

Its subcellular location is the periplasm. It catalyses the reaction L-methionyl-[protein] + a quinone + H2O = L-methionyl-(S)-S-oxide-[protein] + a quinol. The enzyme catalyses L-methionyl-[protein] + a quinone + H2O = L-methionyl-(R)-S-oxide-[protein] + a quinol. Functionally, part of the MsrPQ system that repairs oxidized periplasmic proteins containing methionine sulfoxide residues (Met-O), using respiratory chain electrons. Thus protects these proteins from oxidative-stress damage caused by reactive species of oxygen and chlorine generated by the host defense mechanisms. MsrPQ is essential for the maintenance of envelope integrity under bleach stress, rescuing a wide series of structurally unrelated periplasmic proteins from methionine oxidation. The catalytic subunit MsrP is non-stereospecific, being able to reduce both (R-) and (S-) diastereoisomers of methionine sulfoxide. The sequence is that of Protein-methionine-sulfoxide reductase catalytic subunit MsrP from Actinobacillus succinogenes (strain ATCC 55618 / DSM 22257 / CCUG 43843 / 130Z).